The following is a 685-amino-acid chain: Tripartite terminase subunit 1 (685 aa).

A C3H1-type zinc finger spans residues 173-201 (CWRCVGELMVLPNHGNPSTAEGTHVSCNH). Disordered stretches follow at residues 231–254 (EEKA…EAEG) and 394–423 (LGRG…SGAL). A compositionally biased stretch (basic and acidic residues) spans 395 to 407 (GRGEEEASRESPE). Residue 619-626 (YNKTWGRS) coordinates ATP.

This sequence belongs to the herpesviridae TRM1 protein family. As to quaternary structure, associates with TRM2 and TRM3 to form the tripartite terminase complex. Interacts with portal protein.

It localises to the host nucleus. In terms of biological role, component of the molecular motor that translocates viral genomic DNA in empty capsid during DNA packaging. Forms a tripartite terminase complex together with TRM2 and TRM3 in the host cytoplasm. Once the complex reaches the host nucleus, it interacts with the capsid portal vertex. This portal forms a ring in which genomic DNA is translocated into the capsid. TRM1 carries an endonuclease activity that plays an important role for the cleavage of concatemeric viral DNA into unit length genomes. This Epstein-Barr virus (strain B95-8) (HHV-4) protein is Tripartite terminase subunit 1.